The sequence spans 423 residues: Diels-Alderase pyiF (423 aa).

The N-terminal stretch at 1-17 (MLPSFIFVYSLLATATA) is a signal peptide. Asparagine 60, asparagine 92, and asparagine 219 each carry an N-linked (GlcNAc...) asparagine glycan.

The protein belongs to the Diels-Alderase family.

It participates in mycotoxin biosynthesis. Functionally, diels-Alderase; part of the gene cluster that mediates the biosynthesis of the mycotoxin pyrichalasin H, a tyrosine-derived cytochalasan that inhibits the growth of rice seedlings, but also inhibits lymphocyte capping and actin polymerization and alters cell morphology. Pyrichalasin H is indicated as the responsible agent for the genus-specific pathogenicity of M.grisea toward crabgrass. The first step in the pathway is catalyzed by the O-methyltransferase pyiA which methylates free tyrosine to generate the precursor O-methyltyrosine. The hybrid PKS-NRPS pyiS, assisted by the enoyl reductase pyiC, are responsible for fusion of the O-methyltyrosine precursor and the polyketide backbone. The polyketide synthase module (PKS) of pyiS is responsible for the synthesis of the polyketide backbone and the downstream nonribosomal peptide synthetase (NRPS) amidates the carboxyl end of the polyketide with the O-methyltyrosine precursor. As the NRPS A-domain demonstrates substrate tolerance, pyiS can also use phenylalanine, tyrosine and even para-chlorophenylalanine as amino acid precursor, which leads to the production of novel cytochalasans, including halogenated cytochalasans. Because pyiS lacks a designated enoylreductase (ER) domain, the required activity is provided the enoyl reductase pyiC. Reduction by the hydrolyase pyiE leads to 1,5-dihydropyrrolone, which is substrate for dehydration and intra-molecular Diels-Alder cyclization by the Diels-Alderase pyiF to yield the required isoindolone-fused macrocycle. The tailoring cytochrome P450 monooxygenases piyD and piyG catalyze the hydroxylation at C-18 and C-7, respectivily, whereas the short-chain dehydrogenase/reductase pyiH reduces the carbonyl at C-21 in preparation for the transfer of an acetyl group by the acetyltransferase pyiB. These 3 reactions whose order is not clear yet, lead to the production of O-methylpyrichalasin J, a deacetylated pyrichalasin H. Finally, pyiB to converts O-methylpyrichalasin J into the final product pyrichalasin H via acetylation of C-21. The protein is Diels-Alderase pyiF of Pyricularia grisea (Crabgrass-specific blast fungus).